Consider the following 625-residue polypeptide: Chaperone protein HtpG (625 aa).

The tract at residues 1-339 (MNKQTLSFQA…SSDLPLNVSR (339 aa)) is a; substrate-binding. Residues 340–557 (ELLQESRDVK…DGDISGHLAR (218 aa)) are b. The segment at 558-625 (LLKQAGQSAP…YVQRVNRLLV (68 aa)) is c.

This sequence belongs to the heat shock protein 90 family. In terms of assembly, homodimer.

The protein localises to the cytoplasm. Molecular chaperone. Has ATPase activity. In Methylibium petroleiphilum (strain ATCC BAA-1232 / LMG 22953 / PM1), this protein is Chaperone protein HtpG.